The following is a 210-amino-acid chain: Imidazoleglycerol-phosphate dehydratase (210 aa).

The protein belongs to the imidazoleglycerol-phosphate dehydratase family.

The protein resides in the cytoplasm. It carries out the reaction D-erythro-1-(imidazol-4-yl)glycerol 3-phosphate = 3-(imidazol-4-yl)-2-oxopropyl phosphate + H2O. It functions in the pathway amino-acid biosynthesis; L-histidine biosynthesis; L-histidine from 5-phospho-alpha-D-ribose 1-diphosphate: step 6/9. The sequence is that of Imidazoleglycerol-phosphate dehydratase from Mycobacterium leprae (strain Br4923).